The chain runs to 484 residues: MFQTESHPAGGSPLQSIRSSCDRCRLQKLKCTVQSMESDGRMVCERCVRAKVPCAFGRRRRASRPSDTKKQGDSSTRRSTAPRTTNPEPTVLTPPLSTTSSTSEQTLGGATPSPTLATSSALEAPLETLAECEPDTTAPTYSYHHHHHDSYQLGEGPPTPFPNPATTGGGSGSSMMDWDWLEQDFHANELYCLDPELLASAPASTSTSTGSPTAHHRALPDGGSGSSTMSMGGGADTPFSTTASVAGRRLPALIAEMQQRLEALENGAWLHDGAQSFDHYPIGAVLRLSQEFGALAGQVLGMAATYGGGGGVPPSDVAGLQMMAAVGGGGGLYELGRGGLAEGGSSTATVLLVLGGYVFLVRLYGLVLGHFHAHLNRIPSGSLGGHMHSTPAPTTSPTLQLGELPSGGAMPDVSRIHAALGMLLAALHSVEEQLGQGGEVAREMVVSILTQGSGLEPAKLQDGFGDLGEKVRSVKELLREKMGL.

A DNA-binding region (zn(2)-C6 fungal-type) is located at residues 21 to 54; the sequence is CDRCRLQKLKCTVQSMESDGRMVCERCVRAKVPC. 4 disordered regions span residues 59–117, 136–174, 202–242, and 386–406; these read RRRA…PTLA, TTAPTYSYHHHHHDSYQLGEGPPTPFPNPATTGGGSGSS, PAST…FSTT, and HMHSTPAPTTSPTLQLGELPS. Over residues 64 to 76 the composition is skewed to basic and acidic residues; sequence RPSDTKKQGDSST. Positions 77 to 107 are enriched in low complexity; it reads RRSTAPRTTNPEPTVLTPPLSTTSSTSEQTL. A compositionally biased stretch (low complexity) spans 202 to 213; that stretch reads PASTSTSTGSPT.

It is found in the nucleus. Its function is as follows. Transcription factor that regulates the expression of the gene cluster that mediates the biosynthesis of the tetramic acid Sch210972, a potential anti-HIV fungal natural product that contains a decalin core. The sequence is that of Transcription factor cghD from Chaetomium globosum (strain ATCC 6205 / CBS 148.51 / DSM 1962 / NBRC 6347 / NRRL 1970) (Soil fungus).